Consider the following 215-residue polypeptide: Fibroblast growth factor 10 (215 aa).

A signal peptide spans 1 to 36 (MWKWILTHCASAFPHLPGCCCCFLLLFLVSSVPVTC). The interval 49 to 73 (TNSSSSSSSSSSSSSFSSPSSAGRH) is disordered. N-linked (GlcNAc...) asparagine glycosylation is present at N50. Positions 51 to 69 (SSSSSSSSSSSSSFSSPSS) are enriched in low complexity. An N-linked (GlcNAc...) asparagine glycan is attached at N203.

Belongs to the heparin-binding growth factors family. In terms of assembly, interacts with FGFR1 and FGFR2. Interacts with FGFBP1. Preferentially expressed in the lung in adults.

It localises to the secreted. In terms of biological role, plays an important role in the regulation of embryonic development, cell proliferation and cell differentiation. Required for normal branching morphogenesis. May play a role in wound healing. This chain is Fibroblast growth factor 10 (Fgf10), found in Rattus norvegicus (Rat).